The sequence spans 304 residues: DDRGK domain-containing protein 1 (304 aa).

Residues 1-2 (MD) are Lumenal-facing. The helical transmembrane segment at 3-23 (LIILVGIAIALLVVIISLYLL) threads the bilayer. The Cytoplasmic portion of the chain corresponds to 24–304 (QKKNSTTEAK…LTPVSAEGSS (281 aa)). Positions 31–174 (EAKPAAAAPQ…AERLAKEERE (144 aa)) are disordered. Positions 53–82 (RRAQIARNQRNRLRQNAPVAAAAPQAEAPA) are enriched in low complexity. Over residues 105-174 (LDEKMGAKKR…AERLAKEERE (70 aa)) the composition is skewed to basic and acidic residues.

It belongs to the DDRGK1 family. As to quaternary structure, interacts with Atg9; the interaction is transient.

The protein resides in the endoplasmic reticulum membrane. Substrate adapter for ufmylation, the covalent attachment of the ubiquitin-like modifier UFM1 to substrate proteins. Required for ufmylation of Atg9; protects the nervous system during aging, possibly by stabilizing Atg9 and supporting its function. This is DDRGK domain-containing protein 1 from Drosophila ananassae (Fruit fly).